A 43-amino-acid chain; its full sequence is Protein PsbN (43 aa).

The helical transmembrane segment at 5–27 threads the bilayer; that stretch reads TLVAISISGLLVSFTGYALYTAF.

This sequence belongs to the PsbN family.

The protein localises to the plastid. It is found in the chloroplast thylakoid membrane. Functionally, may play a role in photosystem I and II biogenesis. The polypeptide is Protein PsbN (Coelogyne cristata (Orchid)).